We begin with the raw amino-acid sequence, 415 residues long: Probable peptidoglycan glycosyltransferase FtsW (415 aa).

11 helical membrane passes run 31–51 (PILM…VTSA), 63–83 (FFFV…TVWL), 97–117 (LWIL…GIGH), 133–153 (IQVS…YIAT), 162–182 (ITGM…LLLQ), 185–205 (FGTT…ARAQ), 206–226 (WQMM…VVLS), 245–265 (FGHG…GVWG), 285–305 (FIFA…LIGL), 326–346 (IAGA…ALIN), and 361–381 (LPLM…LGFL).

Belongs to the SEDS family. FtsW subfamily.

Its subcellular location is the cell inner membrane. It catalyses the reaction [GlcNAc-(1-&gt;4)-Mur2Ac(oyl-L-Ala-gamma-D-Glu-L-Lys-D-Ala-D-Ala)](n)-di-trans,octa-cis-undecaprenyl diphosphate + beta-D-GlcNAc-(1-&gt;4)-Mur2Ac(oyl-L-Ala-gamma-D-Glu-L-Lys-D-Ala-D-Ala)-di-trans,octa-cis-undecaprenyl diphosphate = [GlcNAc-(1-&gt;4)-Mur2Ac(oyl-L-Ala-gamma-D-Glu-L-Lys-D-Ala-D-Ala)](n+1)-di-trans,octa-cis-undecaprenyl diphosphate + di-trans,octa-cis-undecaprenyl diphosphate + H(+). Its pathway is cell wall biogenesis; peptidoglycan biosynthesis. Functionally, peptidoglycan polymerase that is essential for cell division. The polypeptide is Probable peptidoglycan glycosyltransferase FtsW (Halothiobacillus neapolitanus (strain ATCC 23641 / c2) (Thiobacillus neapolitanus)).